The following is a 261-amino-acid chain: 3-methyl-2-oxobutanoate hydroxymethyltransferase (261 aa).

Positions 42 and 81 each coordinate Mg(2+). Residues 42–43 (DS), D81, and K110 each bind 3-methyl-2-oxobutanoate. A Mg(2+)-binding site is contributed by E112. Catalysis depends on E179, which acts as the Proton acceptor.

It belongs to the PanB family. As to quaternary structure, homodecamer; pentamer of dimers. The cofactor is Mg(2+).

The protein resides in the cytoplasm. The enzyme catalyses 3-methyl-2-oxobutanoate + (6R)-5,10-methylene-5,6,7,8-tetrahydrofolate + H2O = 2-dehydropantoate + (6S)-5,6,7,8-tetrahydrofolate. The protein operates within cofactor biosynthesis; (R)-pantothenate biosynthesis; (R)-pantoate from 3-methyl-2-oxobutanoate: step 1/2. Its function is as follows. Catalyzes the reversible reaction in which hydroxymethyl group from 5,10-methylenetetrahydrofolate is transferred onto alpha-ketoisovalerate to form ketopantoate. The sequence is that of 3-methyl-2-oxobutanoate hydroxymethyltransferase from Thermus thermophilus (strain ATCC BAA-163 / DSM 7039 / HB27).